Consider the following 559-residue polypeptide: MAVACSPEKDQSLLQLQKVDSSRVILSPVLSSPMETNQPICIPSPYTDRGHDFPTIPFYSATNFSYANPPAISDRPSVHQTLSPSLFWPSHGHVGTTLPLHHLQARPQHGQAVQSPWVELSPLDNVLTSSKSARRRSQENEEGEVSSGGKADLHFCAVCHDYASGYHYGVWSCEGCKAFFKRSIQRHNDYICPATNQCTIDKNRRKSCQACRLHKCYNVGMTKCGMRKERGNFRDPQMRRVTRLSSQGRTSGPSVLNGPAVGPLNTPQPPALTSKQLIERIMEAEPPEIYLMKDMRRPLTEANIMMSLTNLADKELVHMITWAKKIPGFLELGLLDQVHLLECCWLEVLMIGLMWRSVDHPGKLIFSPDLSLSREEGSCVQGFLEIFDMLIAATSRVRELKLQREEYVCLKAMILLNSNMCLSSSEGSEELQSRSKLLRLLDAVTDALVWAIAKTGLTFRQQYTRLAHLLMLLSHIRHVSNKGMDHLHGMKMKNMVPLYDLLLEMLDAHIMHSSRLPRRSPQQETVEQCDAPARPHSPGTSGPTNTWTPSCTGGRGEPQ.

Residues 1 to 155 (MAVACSPEKD…SSGGKADLHF (155 aa)) form a modulating region. The tract at residues 128–148 (TSSKSARRRSQENEEGEVSSG) is disordered. 2 NR C4-type zinc fingers span residues 156–176 (CAVC…CEGC) and 192–216 (CPAT…LHKC). The nuclear receptor DNA-binding region spans 156–221 (CAVCHDYASG…RLHKCYNVGM (66 aa)). The span at 243 to 254 (RLSSQGRTSGPS) shows a compositional bias: polar residues. The segment at 243–269 (RLSSQGRTSGPSVLNGPAVGPLNTPQP) is disordered. The 237-residue stretch at 273-509 (TSKQLIERIM…DLLLEMLDAH (237 aa)) folds into the NR LBD domain. Residues 514-559 (SRLPRRSPQQETVEQCDAPARPHSPGTSGPTNTWTPSCTGGRGEPQ) form a disordered region. Polar residues predominate over residues 538 to 551 (PGTSGPTNTWTPSC).

This sequence belongs to the nuclear hormone receptor family. NR3 subfamily. In terms of assembly, binds DNA as a homodimer. Can form a heterodimer with ER-alpha.

The protein localises to the nucleus. In terms of biological role, binds estrogens with an affinity similar to that of ER-alpha, and activates expression of reporter genes containing estrogen response elements (ERE) in an estrogen-dependent manner. The chain is Estrogen receptor beta (esr2) from Sparus aurata (Gilthead sea bream).